The chain runs to 308 residues: B- and T-lymphocyte attenuator (308 aa).

A signal peptide spans 1–29 (MKTVPAMLVTPRSFREFFILLLGLWSILC). The Extracellular segment spans residues 30–183 (KEPTKRIGEE…ERPGRTWLLY (154 aa)). In terms of domain architecture, Ig-like V-type spans 32–134 (PTKRIGEECR…SANLNSEVIN (103 aa)). Intrachain disulfides connect C40–C69, C64–C124, and C78–C85. N-linked (GlcNAc...) asparagine glycans are attached at residues N49, N74, N81, N148, and N165. A helical transmembrane segment spans residues 184–204 (ALLPLGTSLLLLACVCLLCFL). Over 205–308 (RRIQGKEKKP…TEYASICVRS (104 aa)) the chain is Cytoplasmic.

As to quaternary structure, interacts with tyrosine phosphatases PTPN6/SHP-1 and PTPN11/SHP-2. Interacts with TNFRSF14/HVEM (via cysteine-rich domain 1). Post-translationally, phosphorylated on Tyr residues by TNFRSF14 and by antigen receptors cross-linking, both inducing association with PTPN6 and PTPN11. In terms of processing, N-glycosylated.

It localises to the cell membrane. In terms of biological role, inhibitory receptor on lymphocytes that negatively regulates antigen receptor signaling via PTPN6/SHP-1 and PTPN11/SHP-2. May interact in cis (on the same cell) or in trans (on other cells) with TNFRSF14. In cis interactions, appears to play an immune regulatory role inhibiting in trans interactions in naive T cells to maintain a resting state. In trans interactions, can predominate during adaptive immune response to provide survival signals to effector T cells. This is B- and T-lymphocyte attenuator from Rattus norvegicus (Rat).